Here is a 537-residue protein sequence, read N- to C-terminus: CTP synthase (537 aa).

The amidoligase domain stretch occupies residues M1–I267. S13 serves as a coordination point for CTP. S13 contacts UTP. Position 14–19 (S14–I19) interacts with ATP. Y54 contributes to the L-glutamine binding site. D71 contributes to the ATP binding site. Mg(2+) is bound by residues D71 and E141. CTP contacts are provided by residues D148 to E150, K188 to Q193, and K224. Residues K188–Q193 and K224 each bind UTP. Residues T292–S534 form the Glutamine amidotransferase type-1 domain. G354 provides a ligand contact to L-glutamine. C381 serves as the catalytic Nucleophile; for glutamine hydrolysis. Residues L382 to Q385, E405, and R462 each bind L-glutamine. Residues H507 and E509 contribute to the active site.

It belongs to the CTP synthase family. Homotetramer.

It carries out the reaction UTP + L-glutamine + ATP + H2O = CTP + L-glutamate + ADP + phosphate + 2 H(+). The catalysed reaction is L-glutamine + H2O = L-glutamate + NH4(+). The enzyme catalyses UTP + NH4(+) + ATP = CTP + ADP + phosphate + 2 H(+). Its pathway is pyrimidine metabolism; CTP biosynthesis via de novo pathway; CTP from UDP: step 2/2. Its activity is regulated as follows. Allosterically activated by GTP, when glutamine is the substrate; GTP has no effect on the reaction when ammonia is the substrate. The allosteric effector GTP functions by stabilizing the protein conformation that binds the tetrahedral intermediate(s) formed during glutamine hydrolysis. Inhibited by the product CTP, via allosteric rather than competitive inhibition. In terms of biological role, catalyzes the ATP-dependent amination of UTP to CTP with either L-glutamine or ammonia as the source of nitrogen. Regulates intracellular CTP levels through interactions with the four ribonucleotide triphosphates. The polypeptide is CTP synthase (Pelotomaculum thermopropionicum (strain DSM 13744 / JCM 10971 / SI)).